The primary structure comprises 927 residues: MPVRKQDTQRALTLLEEYRCKLHQTEDKQLRKSIERVIGIFQSNLFQALIDIQEFYEVTLLDNPKSSDNAKPTEPVQTINTWEYSSLPNSTATCETLPSSLILNVEKYRYPDDDITSQEPSSPHMLNDGRNVELVQISEKNISQKENIQGLVSHSLISPLKTPEADTPCPPIVPVIPVIPVPAESNVIPSSTPQANPPPVIVNTDLETPAYVNGTDAEYEYEEITLERGTSGLGFSIAGGTDNPHIGDDISIFITKIISGGAAAQDGRLRVNDCILRVNEVDVHDVTHSKAVEALKEAGSIVRLYVRRRKPVTEKIMDIKLVKGPKGLGFSIAGGVGNQHIPGDNSIYVTKIIEGGAAHKDGRLQIGDKLLAVNTVCLEEVSHEDAVTALKNTSDFVNLKVAKPTTMYMNDNYAPPDITNSYSQQVDNHISPSGFIGHPLPPSPGRYSPAPKGMLEDDDLTREPRKVVLQRGTTGLGFNIVGGEDGEGIFISFILAGGPADLSGELQKGDRIMSVNGVDLKSATHEQAAAALKNAGQTVTIVAQYRPEEYSRFEAKIHDLREQMMNSSISSGSGSLRTSQKRSLYVRALFDYDKTKDSGLPSQGLNFKFGDILHVVNASDDEWWQARQVTADGESEEIGVIPSKRRVEKKERARLKTVKFNSKARGDKGQSFNDKRKKNLFSRKFPFYKNKDQSEMETSDVDQHVTSNASDSESSYRGQEEYVLSYEPVNQQEVNYSRPVIILGPTKDRVNDDLISEFPEKFGSCVPHTTRPKRDYEIDGRDYHFVTSREQMEKDIQDHRFIEAGQYNSHLYGTSVQSVKEVAERGKHCILDVSGNAIKRLQIAQLYPIAIFIKPKSVENIIEMSKRVTEEQGRKTYERAMKLEQEFTEHFTAIVQGDTLEEIYNQIKQIIEEQSSTFIWVPAKEKL.

The L27 domain maps to 4–64 (RKQDTQRALT…FYEVTLLDNP (61 aa)). PDZ domains follow at residues 223–310 (EITL…RRRK), 318–405 (DIKL…AKPT), and 466–547 (KVVL…QYRP). One can recognise an SH3 domain in the interval 581-651 (KRSLYVRALF…PSKRRVEKKE (71 aa)). The disordered stretch occupies residues 692-719 (DQSEMETSDVDQHVTSNASDSESSYRGQ). Polar residues predominate over residues 704 to 717 (HVTSNASDSESSYR). In terms of domain architecture, Guanylate kinase-like spans 737–912 (SRPVIILGPT…IYNQIKQIIE (176 aa)).

The protein belongs to the MAGUK family.

It is found in the cell membrane. It localises to the endoplasmic reticulum membrane. Its subcellular location is the cell junction. The protein resides in the cytoplasm. The protein localises to the apical cell membrane. Functionally, essential multidomain scaffolding protein required for normal development. Recruits channels, receptors and signaling molecules to discrete plasma membrane domains in polarized cells. Promotes epithelial cell layer barrier function via maintaining cell-cell adhesion. May play a role in adherens junction assembly, signal transduction and cell proliferation. The sequence is that of Disks large homolog 1 (dlg1) from Xenopus tropicalis (Western clawed frog).